Consider the following 392-residue polypeptide: Galactokinase (392 aa).

40–43 serves as a coordination point for substrate; that stretch reads EHID. ATP contacts are provided by residues Ser-74 and 128-134; that span reads GSGLSSS. Residues Ser-134 and Glu-167 each contribute to the Mg(2+) site. Catalysis depends on Asp-179, which acts as the Proton acceptor. Residue Tyr-229 coordinates substrate.

The protein belongs to the GHMP kinase family. GalK subfamily.

The protein resides in the cytoplasm. The enzyme catalyses alpha-D-galactose + ATP = alpha-D-galactose 1-phosphate + ADP + H(+). The protein operates within carbohydrate metabolism; galactose metabolism. In terms of biological role, catalyzes the transfer of the gamma-phosphate of ATP to D-galactose to form alpha-D-galactose-1-phosphate (Gal-1-P). In Clostridium tetani (strain Massachusetts / E88), this protein is Galactokinase.